The following is a 437-amino-acid chain: Enolase (437 aa).

Q162 is a binding site for (2R)-2-phosphoglycerate. Residue E204 is the Proton donor of the active site. D251, E297, and D324 together coordinate Mg(2+). K349, R378, S379, and K400 together coordinate (2R)-2-phosphoglycerate. The active-site Proton acceptor is the K349.

This sequence belongs to the enolase family. Mg(2+) is required as a cofactor.

The protein localises to the cytoplasm. It is found in the secreted. It localises to the cell surface. It carries out the reaction (2R)-2-phosphoglycerate = phosphoenolpyruvate + H2O. Its pathway is carbohydrate degradation; glycolysis; pyruvate from D-glyceraldehyde 3-phosphate: step 4/5. Functionally, catalyzes the reversible conversion of 2-phosphoglycerate (2-PG) into phosphoenolpyruvate (PEP). It is essential for the degradation of carbohydrates via glycolysis. The protein is Enolase of Chlorobium chlorochromatii (strain CaD3).